The following is a 352-amino-acid chain: Protein RecA (352 aa).

65–72 (GPESSGKT) serves as a coordination point for ATP. The disordered stretch occupies residues 333–352 (VKAAANREPVEEVEEADTDI). The segment covering 343–352 (EEVEEADTDI) has biased composition (acidic residues).

Belongs to the RecA family.

It is found in the cytoplasm. In terms of biological role, can catalyze the hydrolysis of ATP in the presence of single-stranded DNA, the ATP-dependent uptake of single-stranded DNA by duplex DNA, and the ATP-dependent hybridization of homologous single-stranded DNAs. It interacts with LexA causing its activation and leading to its autocatalytic cleavage. The chain is Protein RecA from Pseudomonas fluorescens.